We begin with the raw amino-acid sequence, 951 residues long: Valine--tRNA ligase (951 aa).

The 'HIGH' region signature appears at 42-52 (PNVTGSLHMGH). A 'KMSKS' region motif is present at residues 554-558 (KMSKS). K557 serves as a coordination point for ATP. The stretch at 882-944 (LINKDDELAR…AEAKAKLIEQ (63 aa)) forms a coiled coil.

The protein belongs to the class-I aminoacyl-tRNA synthetase family. ValS type 1 subfamily. In terms of assembly, monomer.

Its subcellular location is the cytoplasm. The catalysed reaction is tRNA(Val) + L-valine + ATP = L-valyl-tRNA(Val) + AMP + diphosphate. Its function is as follows. Catalyzes the attachment of valine to tRNA(Val). As ValRS can inadvertently accommodate and process structurally similar amino acids such as threonine, to avoid such errors, it has a 'posttransfer' editing activity that hydrolyzes mischarged Thr-tRNA(Val) in a tRNA-dependent manner. This Salmonella choleraesuis (strain SC-B67) protein is Valine--tRNA ligase.